We begin with the raw amino-acid sequence, 163 residues long: Ribonuclease P protein subunit p25-like protein (163 aa).

Disordered stretches follow at residues 1 to 22 (MEHYRKAGSVELPAPSPMPQLP) and 129 to 163 (NEYGYQPPGAPPDLGPTPASSCGPQPRRRARDTRF). The segment covering 154–163 (PRRRARDTRF) has biased composition (basic residues).

It belongs to the histone-like Alba family.

Its subcellular location is the nucleus. Functionally, may be a component of ribonuclease P or MRP. The chain is Ribonuclease P protein subunit p25-like protein (RPP25L) from Bos taurus (Bovine).